A 186-amino-acid polypeptide reads, in one-letter code: Ribosome-recycling factor (186 aa).

Belongs to the RRF family.

It is found in the cytoplasm. Its function is as follows. Responsible for the release of ribosomes from messenger RNA at the termination of protein biosynthesis. May increase the efficiency of translation by recycling ribosomes from one round of translation to another. In Limosilactobacillus reuteri (Lactobacillus reuteri), this protein is Ribosome-recycling factor.